A 392-amino-acid polypeptide reads, in one-letter code: Streptogrisin-D (392 aa).

The first 64 residues, 1–64 (MCVSRRRNSG…AGFTFQTANA (64 aa)), serve as a signal peptide directing secretion. The propeptide occupies 65–204 (SDDVPAFGAK…NRTAGEFTPL (140 aa)). A disulfide bridge links cysteine 218 with cysteine 238. Residues histidine 237, aspartate 266, and serine 348 each act as charge relay system in the active site. Cysteine 342 and cysteine 369 are joined by a disulfide.

It belongs to the peptidase S1 family. In terms of assembly, homodimer.

Functionally, has a primary specificity for large aliphatic or aromatic amino acids. This chain is Streptogrisin-D (sprD), found in Streptomyces griseus.